The sequence spans 265 residues: Catechol O-methyltransferase (265 aa).

Residues 1–2 (ML) are Cytoplasmic-facing. Residues 3–19 (LAAVSLGLLLLAFLLLL) traverse the membrane as a helical; Signal-anchor for type II membrane protein segment. Topologically, residues 20-265 (RHLGWGLVAI…QGPGSSPVKS (246 aa)) are extracellular. Residues V85, E107, S115, E133, I134, 160 to 163 (GASQ), S162, and D184 each bind S-adenosyl-L-methionine. Mg(2+) is bound at residue D184. K187 contributes to the substrate binding site. Residues D212 and N213 each contribute to the Mg(2+) site. Substrate contacts are provided by N213 and E242. Residues S260, S261, and S265 each carry the phosphoserine modification.

This sequence belongs to the class I-like SAM-binding methyltransferase superfamily. Cation-dependent O-methyltransferase family. Mg(2+) serves as cofactor.

The protein localises to the cytoplasm. The protein resides in the cell membrane. It carries out the reaction a catechol + S-adenosyl-L-methionine = a guaiacol + S-adenosyl-L-homocysteine + H(+). The enzyme catalyses 2-hydroxyestrone + S-adenosyl-L-methionine = 2-hydroxy-3-methoxy-estrone + S-adenosyl-L-homocysteine + H(+). It catalyses the reaction 4-hydroxyestrone + S-adenosyl-L-methionine = 4-methoxyestrone + S-adenosyl-L-homocysteine + H(+). The catalysed reaction is 2-hydroxyestrone + S-adenosyl-L-methionine = 2-methoxyestrone + S-adenosyl-L-homocysteine + H(+). It carries out the reaction 4-hydroxy-17beta-estradiol + S-adenosyl-L-methionine = 4-methoxy-17beta-estradiol + S-adenosyl-L-homocysteine + H(+). The enzyme catalyses 2-hydroxy-17beta-estradiol + S-adenosyl-L-methionine = 2-hydroxy-3-methoxy-17beta-estradiol + S-adenosyl-L-homocysteine + H(+). It catalyses the reaction 2-hydroxy-17beta-estradiol + S-adenosyl-L-methionine = 2-methoxy-17beta-estradiol + S-adenosyl-L-homocysteine + H(+). Its function is as follows. Catalyzes the O-methylation, and thereby the inactivation, of catecholamine neurotransmitters and catechol hormones. Also shortens the biological half-lives of certain neuroactive drugs, like L-DOPA, alpha-methyl DOPA and isoproterenol. This is Catechol O-methyltransferase from Mus musculus (Mouse).